A 400-amino-acid polypeptide reads, in one-letter code: Probable tRNA pseudouridine synthase D (400 aa).

The active-site Nucleophile is aspartate 89. The TRUD domain maps to 162-357; sequence GVPNYYGLQR…AGGDRKPALL (196 aa).

This sequence belongs to the pseudouridine synthase TruD family.

The enzyme catalyses uridine(13) in tRNA = pseudouridine(13) in tRNA. Could be responsible for synthesis of pseudouridine from uracil-13 in transfer RNAs. The polypeptide is Probable tRNA pseudouridine synthase D (Methanopyrus kandleri (strain AV19 / DSM 6324 / JCM 9639 / NBRC 100938)).